Consider the following 234-residue polypeptide: Putative methyltransferase-like protein 15P1 (234 aa).

Residues 100-102, aspartate 119, phenylalanine 146, aspartate 169, and glutamine 176 contribute to the S-adenosyl-L-methionine site; that span reads GGH.

The protein belongs to the methyltransferase superfamily. RsmH family.

Its function is as follows. Probable S-adenosyl-L-methionine-dependent methyltransferase. The polypeptide is Putative methyltransferase-like protein 15P1 (METTL15P1) (Homo sapiens (Human)).